Reading from the N-terminus, the 423-residue chain is Kynureninase (423 aa).

Pyridoxal 5'-phosphate contacts are provided by residues L105, S106, 133–136 (FPSD), D218, H221, and Y243. K244 bears the N6-(pyridoxal phosphate)lysine mark. Residues W273 and N301 each contribute to the pyridoxal 5'-phosphate site.

This sequence belongs to the kynureninase family. As to quaternary structure, homodimer. Requires pyridoxal 5'-phosphate as cofactor.

It catalyses the reaction L-kynurenine + H2O = anthranilate + L-alanine + H(+). The enzyme catalyses 3-hydroxy-L-kynurenine + H2O = 3-hydroxyanthranilate + L-alanine + H(+). It functions in the pathway amino-acid degradation; L-kynurenine degradation; L-alanine and anthranilate from L-kynurenine: step 1/1. The protein operates within cofactor biosynthesis; NAD(+) biosynthesis; quinolinate from L-kynurenine: step 2/3. Catalyzes the cleavage of L-kynurenine (L-Kyn) and L-3-hydroxykynurenine (L-3OHKyn) into anthranilic acid (AA) and 3-hydroxyanthranilic acid (3-OHAA), respectively. This chain is Kynureninase, found in Xanthomonas axonopodis pv. citri (strain 306).